The sequence spans 397 residues: Phosphoglycerate kinase (397 aa).

Substrate is bound by residues 25–27, Arg-41, 64–67, Arg-118, and Arg-151; these read DLN and HLGR. ATP contacts are provided by residues Lys-202, Glu-324, and 350–353; that span reads GGDT.

It belongs to the phosphoglycerate kinase family. As to quaternary structure, monomer.

It is found in the cytoplasm. It carries out the reaction (2R)-3-phosphoglycerate + ATP = (2R)-3-phospho-glyceroyl phosphate + ADP. The protein operates within carbohydrate degradation; glycolysis; pyruvate from D-glyceraldehyde 3-phosphate: step 2/5. In Janthinobacterium sp. (strain Marseille) (Minibacterium massiliensis), this protein is Phosphoglycerate kinase.